A 174-amino-acid chain; its full sequence is DNA endonuclease I-HmuI (174 aa).

This Bacillus subtilis (Bacteriophage SP01) protein is DNA endonuclease I-HmuI.